We begin with the raw amino-acid sequence, 403 residues long: S-adenosylmethionine synthase (403 aa).

His-15 provides a ligand contact to ATP. Position 17 (Asp-17) interacts with Mg(2+). Glu-43 contributes to the K(+) binding site. Glu-56 and Gln-99 together coordinate L-methionine. Residues 99–109 (QSPDINQGVDR) form a flexible loop region. Residues 166–168 (DAK), 232–233 (KF), Asp-241, 247–248 (RK), Ala-264, and Lys-268 contribute to the ATP site. Asp-241 is a binding site for L-methionine. Lys-272 is an L-methionine binding site.

This sequence belongs to the AdoMet synthase family. As to quaternary structure, homotetramer; dimer of dimers. The cofactor is Mg(2+). K(+) is required as a cofactor.

It is found in the cytoplasm. It catalyses the reaction L-methionine + ATP + H2O = S-adenosyl-L-methionine + phosphate + diphosphate. The protein operates within amino-acid biosynthesis; S-adenosyl-L-methionine biosynthesis; S-adenosyl-L-methionine from L-methionine: step 1/1. In terms of biological role, catalyzes the formation of S-adenosylmethionine (AdoMet) from methionine and ATP. The overall synthetic reaction is composed of two sequential steps, AdoMet formation and the subsequent tripolyphosphate hydrolysis which occurs prior to release of AdoMet from the enzyme. This chain is S-adenosylmethionine synthase, found in Xanthomonas axonopodis pv. citri (strain 306).